A 202-amino-acid polypeptide reads, in one-letter code: Snake venom metalloproteinase Ac1 (202 aa).

The region spanning 6–202 (RYMEIVIVVD…ENPPCILNKP (197 aa)) is the Peptidase M12B domain. Residues Glu-9 and Asp-93 each coordinate Ca(2+). 2 disulfide bridges follow: Cys-117–Cys-197 and Cys-157–Cys-181. Residue His-142 coordinates Zn(2+). Residue Glu-143 is part of the active site. Residues His-146 and His-152 each coordinate Zn(2+). Residues Cys-197 and Asn-200 each contribute to the Ca(2+) site.

Belongs to the venom metalloproteinase (M12B) family. P-I subfamily. In terms of assembly, monomer. Requires Zn(2+) as cofactor. In terms of tissue distribution, expressed by the venom gland.

The protein localises to the secreted. In terms of biological role, snake venom metalloproteinase that impairs hemostasis in the envenomed animal. The protein is Snake venom metalloproteinase Ac1 of Deinagkistrodon acutus (Hundred-pace snake).